We begin with the raw amino-acid sequence, 271 residues long: Probable ribosomal RNA small subunit methyltransferase A (271 aa).

S-adenosyl-L-methionine-binding residues include Asn22, Leu24, Gly49, Glu70, Asp97, and Asn112.

Belongs to the class I-like SAM-binding methyltransferase superfamily. rRNA adenine N(6)-methyltransferase family. RsmA subfamily.

The protein resides in the cytoplasm. In terms of biological role, specifically dimethylates two adjacent adenosines in the loop of a conserved hairpin near the 3'-end of 16S rRNA in the 30S particle. May play a critical role in biogenesis of 30S subunits. The polypeptide is Probable ribosomal RNA small subunit methyltransferase A (Methanosphaera stadtmanae (strain ATCC 43021 / DSM 3091 / JCM 11832 / MCB-3)).